We begin with the raw amino-acid sequence, 293 residues long: Formamidopyrimidine-DNA glycosylase (293 aa).

Residue Pro2 is the Schiff-base intermediate with DNA of the active site. Catalysis depends on Glu3, which acts as the Proton donor. Lys58 acts as the Proton donor; for beta-elimination activity in catalysis. The DNA site is built by His104, Arg123, and Arg166. The FPG-type zinc finger occupies 257-293 (KVYDREGEPCPTLRCKGHVQRIVQAGRSTFFCATCQR). Arg283 functions as the Proton donor; for delta-elimination activity in the catalytic mechanism.

This sequence belongs to the FPG family. As to quaternary structure, monomer. It depends on Zn(2+) as a cofactor.

The enzyme catalyses Hydrolysis of DNA containing ring-opened 7-methylguanine residues, releasing 2,6-diamino-4-hydroxy-5-(N-methyl)formamidopyrimidine.. It carries out the reaction 2'-deoxyribonucleotide-(2'-deoxyribose 5'-phosphate)-2'-deoxyribonucleotide-DNA = a 3'-end 2'-deoxyribonucleotide-(2,3-dehydro-2,3-deoxyribose 5'-phosphate)-DNA + a 5'-end 5'-phospho-2'-deoxyribonucleoside-DNA + H(+). Functionally, involved in base excision repair of DNA damaged by oxidation or by mutagenic agents. Acts as a DNA glycosylase that recognizes and removes damaged bases. Has a preference for oxidized purines, such as 7,8-dihydro-8-oxoguanine (8-oxoG). Has AP (apurinic/apyrimidinic) lyase activity and introduces nicks in the DNA strand. Cleaves the DNA backbone by beta-delta elimination to generate a single-strand break at the site of the removed base with both 3'- and 5'-phosphates. In Azorhizobium caulinodans (strain ATCC 43989 / DSM 5975 / JCM 20966 / LMG 6465 / NBRC 14845 / NCIMB 13405 / ORS 571), this protein is Formamidopyrimidine-DNA glycosylase.